Consider the following 313-residue polypeptide: Ribosomal protein L11 methyltransferase (313 aa).

Residues Thr163, Gly184, Asp206, and Asn249 each contribute to the S-adenosyl-L-methionine site.

The protein belongs to the methyltransferase superfamily. PrmA family.

It localises to the cytoplasm. It carries out the reaction L-lysyl-[protein] + 3 S-adenosyl-L-methionine = N(6),N(6),N(6)-trimethyl-L-lysyl-[protein] + 3 S-adenosyl-L-homocysteine + 3 H(+). Functionally, methylates ribosomal protein L11. The chain is Ribosomal protein L11 methyltransferase from Brevibacillus brevis (strain 47 / JCM 6285 / NBRC 100599).